A 208-amino-acid polypeptide reads, in one-letter code: Outer-membrane lipoprotein carrier protein (208 aa).

The first 21 residues, 1–21 (MKRTATLLVVALILALNTAQA), serve as a signal peptide directing secretion.

Belongs to the LolA family. As to quaternary structure, monomer.

The protein resides in the periplasm. Its function is as follows. Participates in the translocation of lipoproteins from the inner membrane to the outer membrane. Only forms a complex with a lipoprotein if the residue after the N-terminal Cys is not an aspartate (The Asp acts as a targeting signal to indicate that the lipoprotein should stay in the inner membrane). The chain is Outer-membrane lipoprotein carrier protein from Halorhodospira halophila (strain DSM 244 / SL1) (Ectothiorhodospira halophila (strain DSM 244 / SL1)).